The chain runs to 90 residues: Bombyxin B-7 (90 aa).

The N-terminal stretch at 1–20 is a signal peptide; the sequence is MMKTSVMLMLVVVISLMCSG. 3 cysteine pairs are disulfide-bonded: Cys30–Cys76, Cys42–Cys89, and Cys75–Cys80. A propeptide spans 49–67 (c peptide like); it reads GGAQYAPYFWTRQYLGSRG.

The protein belongs to the insulin family. Heterodimer of a B chain and an A chain linked by two disulfide bonds.

The protein localises to the secreted. Its function is as follows. Brain peptide responsible for activation of prothoracic glands to produce ecdysone in insects. The chain is Bombyxin B-7 (BBXB7) from Bombyx mori (Silk moth).